The chain runs to 485 residues: NADH-quinone oxidoreductase subunit N (485 aa).

14 consecutive transmembrane segments (helical) span residues 10–30 (AMLPLLIVGLTVVVVMLSIAW), 35–55 (FINATLTVIGLNLALLSLYFV), 75–95 (FYIGLVIVASLATSTFAYPWL), 104–124 (EFYLLVLIATMGGILLASANH), 125–145 (LASLFLGIELISLPLFGLIGY), 159–179 (YMLLSAAASSFLLFGMALLYA), 203–223 (ILAGLGMMIVGLGFKLSLVPF), 235–255 (PAPVSTFLATASKIAIFAVVM), 271–291 (LVLSLIAVASILFGNLMAISQ), 297–317 (LLGYSSIAHLGYLLIALVAVQ), 327–347 (GVYLAGYLFSSLGAFGVVSLM), 374–394 (AVMTVMMLSLAGIPMTLGFIG), 408–427 (WWLTGAVVLGSAIGLYYYLR), and 449–469 (ALTAGGVVVLISAILVLVLGI).

This sequence belongs to the complex I subunit 2 family. NDH-1 is composed of 13 different subunits. Subunits NuoA, H, J, K, L, M, N constitute the membrane sector of the complex.

Its subcellular location is the cell inner membrane. The catalysed reaction is a quinone + NADH + 5 H(+)(in) = a quinol + NAD(+) + 4 H(+)(out). Its function is as follows. NDH-1 shuttles electrons from NADH, via FMN and iron-sulfur (Fe-S) centers, to quinones in the respiratory chain. The immediate electron acceptor for the enzyme in this species is believed to be ubiquinone. Couples the redox reaction to proton translocation (for every two electrons transferred, four hydrogen ions are translocated across the cytoplasmic membrane), and thus conserves the redox energy in a proton gradient. The chain is NADH-quinone oxidoreductase subunit N from Yersinia enterocolitica serotype O:8 / biotype 1B (strain NCTC 13174 / 8081).